Reading from the N-terminus, the 199-residue chain is Probable nicotinate-nucleotide adenylyltransferase (199 aa).

Belongs to the NadD family.

It catalyses the reaction nicotinate beta-D-ribonucleotide + ATP + H(+) = deamido-NAD(+) + diphosphate. The protein operates within cofactor biosynthesis; NAD(+) biosynthesis; deamido-NAD(+) from nicotinate D-ribonucleotide: step 1/1. Functionally, catalyzes the reversible adenylation of nicotinate mononucleotide (NaMN) to nicotinic acid adenine dinucleotide (NaAD). This Chloroherpeton thalassium (strain ATCC 35110 / GB-78) protein is Probable nicotinate-nucleotide adenylyltransferase.